We begin with the raw amino-acid sequence, 479 residues long: MLPVVALVGRPNVGKSTLFNRLTRTRDALVADFPGLTRDRKYGQANYDGYQFIVIDTGGIHGDEEGIDEEMAKQSLLAVDEADVVLFMVDARDGVTVGDQAIADHLRKQNKKVYLVCNKIDGIDAHSAMADFYSLSLGELYGIAAAHGRGVEQLLEICFKPIAEEYPDVIVPKDVASEELEHDEIDYDKLPLKLAIVGRPNVGKSTLINRILGEERVVVYDMPGTTRDSVYIPMQRNEREYVLIDTAGVRRRGRIGEAIEKFSVVKTLQAIEDANVVLIVVDARETISDQDLNLIGFALNAGRSIVIAVNKWDGLQNDHKEEIKRELDRRLGFVDFARLHFISALHGTGVGHLFESVEEAYASATQRISTSKLTKIMEMAQEEHQPPLVSGRRVKLKYAHAGGYNPPRIIIHGNQVKDLPGAYQRYLINYFRKSLGVMGTPIKVEFREPVNPYEGKKNQLTLSQQRKRRRLMKFLKKKK.

EngA-type G domains lie at 3 to 166 (PVVA…AEEY) and 192 to 365 (LKLA…ASAT). GTP-binding positions include 9–16 (GRPNVGKS), 56–60 (DTGGI), 118–121 (NKID), 198–205 (GRPNVGKS), 245–249 (DTAGV), and 310–313 (NKWD). A KH-like domain is found at 366 to 450 (QRISTSKLTK…PIKVEFREPV (85 aa)).

Belongs to the TRAFAC class TrmE-Era-EngA-EngB-Septin-like GTPase superfamily. EngA (Der) GTPase family. Associates with the 50S ribosomal subunit.

In terms of biological role, GTPase that plays an essential role in the late steps of ribosome biogenesis. The polypeptide is GTPase Der (Idiomarina loihiensis (strain ATCC BAA-735 / DSM 15497 / L2-TR)).